A 609-amino-acid polypeptide reads, in one-letter code: N-acetyltransferase ESCO2 (609 aa).

Disordered regions lie at residues 1–71 (MLSR…RVSP), 100–165 (EAKS…TDQV), 197–241 (KKPT…SPVR), and 314–357 (PDHD…LTAT). Polar residues-rich tracts occupy residues 13–22 (AESNPSKKQI) and 41–54 (ISLNSPQKIPSTPK). The span at 126 to 135 (PAKKVQKKPR) shows a compositional bias: basic residues. Positions 214-230 (PTYEKPSIRKPVREKEL) are enriched in basic and acidic residues. The span at 345-355 (PLNSSTPSALT) shows a compositional bias: polar residues. The CCHH-type zinc-finger motif lies at 392 to 416 (TTCASCGMLYSTDSPEDNFQHTQFH).

The protein belongs to the acetyltransferase family. ECO subfamily.

Its subcellular location is the nucleus. The protein localises to the chromosome. It catalyses the reaction L-lysyl-[protein] + acetyl-CoA = N(6)-acetyl-L-lysyl-[protein] + CoA + H(+). Functionally, acetyltransferase required for the establishment of sister chromatid cohesion. Couples the processes of cohesion and DNA replication to ensure that only sister chromatids become paired together. Essential for early development. In Danio rerio (Zebrafish), this protein is N-acetyltransferase ESCO2 (esco2).